Here is a 567-residue protein sequence, read N- to C-terminus: MEGTDDASALQEPPDPEVLEVDPTFRYIRYKEVIGKGAFKTVYKAFDEVDGIEVAWNQVRIDDVLQSPNCLERLYSEVRLLKSLKHNNIIRFYNSWIDDKNKTVNIITELFTSGSLRHYRKKHRKVNMKAVKNWARQILMGLRYLHGQEPPIIHRDLKCDNIFINGNHGEVKIGDLGLATVMEQANAKSVIGTPEFMAPELYDENYNELADIYSFGMCMLEMVTFDYPYCECKNSAQIYKKVSSGIKPASLSRVKDPEVKQFIEKCLLPASERLSAKELLLDPFLQLNGLTMNNPLPLPDIVMPKEGAFGDRCLMSEGPPTTRPSKTLSIDLDEDSNLPIVTFSDNSGSRCIEVRRAKRGNFFVLKGEENDEQSVSLILRIVDENGRVRNIHFLFYQEGDTASKVSSEMVEQLELTDQNVTFIAELIDILLVNMIPTWKTDVTVDHLIHSQLNQNSRSHHNEAKPQKQEETVFHDTCELVSHSCNSDCPRSDEEDKQCVDATKGEDKSSIQEVEEATEPVSLEEEERLRQELEEIEAKYQEDMKEIATKREEAIMETKKKLSLMKLK.

The region spanning 28 to 285 (IRYKEVIGKG…AKELLLDPFL (258 aa)) is the Protein kinase domain. ATP contacts are provided by residues 108 to 111 (TELF) and Lys-158. The Proton acceptor role is filled by Asp-175. Residues 499–509 (VDATKGEDKSS) are compositionally biased toward basic and acidic residues. Positions 499–528 (VDATKGEDKSSIQEVEEATEPVSLEEEERL) are disordered. Over residues 512 to 525 (EVEEATEPVSLEEE) the composition is skewed to acidic residues. Residues 519–553 (PVSLEEEERLRQELEEIEAKYQEDMKEIATKREEA) are a coiled coil.

Belongs to the protein kinase superfamily. Ser/Thr protein kinase family. WNK subfamily.

It carries out the reaction L-seryl-[protein] + ATP = O-phospho-L-seryl-[protein] + ADP + H(+). The enzyme catalyses L-threonyl-[protein] + ATP = O-phospho-L-threonyl-[protein] + ADP + H(+). In terms of biological role, may regulate flowering time by modulating the photoperiod pathway. The sequence is that of Probable serine/threonine-protein kinase WNK6 (WNK6) from Arabidopsis thaliana (Mouse-ear cress).